Consider the following 340-residue polypeptide: Gigasin-2 (340 aa).

Positions 1 to 21 (MNKMSPLYVLALCCLATTVFA) are cleaved as a signal peptide. EGF-like domains follow at residues 22-57 (KYDCTNNGGYGCKYGGTCHFYGFCICPKGFQGEDCG) and 65-97 (TAANCTAECKNGGTCYESDRCYCPHGFIGDMCE). 6 cysteine pairs are disulfide-bonded: Cys-25/Cys-39, Cys-33/Cys-45, Cys-47/Cys-56, Cys-69/Cys-79, Cys-73/Cys-85, and Cys-87/Cys-96.

In terms of tissue distribution, component of the organic matrix of calcified shell layers.

In Magallana gigas (Pacific oyster), this protein is Gigasin-2.